The chain runs to 711 residues: Long-chain-fatty-acid--CoA ligase 4 (711 aa).

A helical; Signal-anchor for type III membrane protein transmembrane segment spans residues 8 to 28; sequence LTIVLLPVHLLITIYSALIFI. Residues 29 to 711 are Cytoplasmic-facing; the sequence is PWYFLTNAKK…KDIERMYGGK (683 aa). Serine 447 is modified (phosphoserine).

Belongs to the ATP-dependent AMP-binding enzyme family. It depends on Mg(2+) as a cofactor.

Its subcellular location is the mitochondrion outer membrane. The protein resides in the peroxisome membrane. It localises to the microsome membrane. It is found in the endoplasmic reticulum membrane. The protein localises to the cell membrane. It catalyses the reaction a long-chain fatty acid + ATP + CoA = a long-chain fatty acyl-CoA + AMP + diphosphate. The catalysed reaction is (5Z,8Z,11Z,14Z)-eicosatetraenoate + ATP + CoA = (5Z,8Z,11Z,14Z)-eicosatetraenoyl-CoA + AMP + diphosphate. It carries out the reaction 15-hydroxy-(5Z,8Z,11Z,13E)-eicosatetraenoate + ATP + CoA = 15-hydroxy-(5Z,8Z,11Z,13E)-eicosatetraenoyl-CoA + AMP + diphosphate. The enzyme catalyses 12-hydroxy-(5Z,8Z,10E,14Z)-eicosatetraenoate + ATP + CoA = 12-hydroxy-(5Z,8Z,10E,14Z)-eicosatetraenoyl-CoA + AMP + diphosphate. It catalyses the reaction 5-hydroxy-(6E,8Z,11Z,14Z)-eicosatetraenoate + ATP + CoA = 5-hydroxy-(6E,8Z,11Z,14Z)-eicosatetraenoyl-CoA + AMP + diphosphate. The catalysed reaction is 5,6-epoxy-(8Z,11Z,14Z)-eicosatrienoate + ATP + CoA = 5,6-epoxy-(8Z,11Z,14Z)-eicosatrienoyl-CoA + AMP + diphosphate. It carries out the reaction 14,15-epoxy-(5Z,8Z,11Z)-eicosatrienoate + ATP + CoA = 14,15-epoxy-(5Z,8Z,11Z)-eicosatrienoyl-CoA + AMP + diphosphate. The enzyme catalyses 11,12-epoxy-(5Z,8Z,14Z)-eicosatrienoate + ATP + CoA = 11,12-epoxy-(5Z,8Z,14Z)-eicosatrienoyl-CoA + AMP + diphosphate. It catalyses the reaction 8,9-epoxy-(5Z,11Z,14Z)-eicosatrienoate + ATP + CoA = 8,9-epoxy-(5Z,11Z,14Z)-eicosatrienoyl-CoA + AMP + diphosphate. The catalysed reaction is hexadecanoate + ATP + CoA = hexadecanoyl-CoA + AMP + diphosphate. It carries out the reaction (E)-hexadec-2-enoate + ATP + CoA = (2E)-hexadecenoyl-CoA + AMP + diphosphate. Its activity is regulated as follows. Both triacsin C and rosiglitazone inhibit arachidonoyl-CoA ligase activity. Its function is as follows. Catalyzes the conversion of long-chain fatty acids to their active form acyl-CoA for both synthesis of cellular lipids, and degradation via beta-oxidation. Preferentially activates arachidonate and eicosapentaenoate as substrates. Preferentially activates 8,9-EET &gt; 14,15-EET &gt; 5,6-EET &gt; 11,12-EET. Modulates glucose-stimulated insulin secretion by regulating the levels of unesterified EETs. Modulates prostaglandin E2 secretion. The sequence is that of Long-chain-fatty-acid--CoA ligase 4 (Acsl4) from Rattus norvegicus (Rat).